The primary structure comprises 74 residues: Translation initiation factor IF-1 (74 aa).

Positions 1 to 73 constitute an S1-like domain; the sequence is MSNKEDIIKM…TKGRIVYRKK (73 aa).

It belongs to the IF-1 family. Component of the 30S ribosomal translation pre-initiation complex which assembles on the 30S ribosome in the order IF-2 and IF-3, IF-1 and N-formylmethionyl-tRNA(fMet); mRNA recruitment can occur at any time during PIC assembly.

Its subcellular location is the cytoplasm. One of the essential components for the initiation of protein synthesis. Stabilizes the binding of IF-2 and IF-3 on the 30S subunit to which N-formylmethionyl-tRNA(fMet) subsequently binds. Helps modulate mRNA selection, yielding the 30S pre-initiation complex (PIC). Upon addition of the 50S ribosomal subunit IF-1, IF-2 and IF-3 are released leaving the mature 70S translation initiation complex. The protein is Translation initiation factor IF-1 of Thermosipho melanesiensis (strain DSM 12029 / CIP 104789 / BI429).